A 295-amino-acid polypeptide reads, in one-letter code: Putative NADH-ubiquinone oxidoreductase MJ0520 (295 aa).

8 consecutive transmembrane segments (helical) span residues leucine 8–leucine 28, leucine 69–isoleucine 89, valine 129–threonine 149, isoleucine 163–valine 183, isoleucine 199–glutamate 219, alanine 220–isoleucine 240, proline 243–leucine 263, and valine 273–valine 293.

The protein belongs to the complex I subunit 1 family.

The protein resides in the cell membrane. The enzyme catalyses a ubiquinone + NADH + 5 H(+)(in) = a ubiquinol + NAD(+) + 4 H(+)(out). The protein is Putative NADH-ubiquinone oxidoreductase MJ0520 of Methanocaldococcus jannaschii (strain ATCC 43067 / DSM 2661 / JAL-1 / JCM 10045 / NBRC 100440) (Methanococcus jannaschii).